The following is a 261-amino-acid chain: NAD(P)H-quinone oxidoreductase subunit K, chloroplastic (261 aa).

[4Fe-4S] cluster-binding residues include C43, C44, C108, and C139.

The protein belongs to the complex I 20 kDa subunit family. NDH is composed of at least 16 different subunits, 5 of which are encoded in the nucleus. [4Fe-4S] cluster serves as cofactor.

The protein resides in the plastid. It localises to the chloroplast thylakoid membrane. It carries out the reaction a plastoquinone + NADH + (n+1) H(+)(in) = a plastoquinol + NAD(+) + n H(+)(out). It catalyses the reaction a plastoquinone + NADPH + (n+1) H(+)(in) = a plastoquinol + NADP(+) + n H(+)(out). In terms of biological role, NDH shuttles electrons from NAD(P)H:plastoquinone, via FMN and iron-sulfur (Fe-S) centers, to quinones in the photosynthetic chain and possibly in a chloroplast respiratory chain. The immediate electron acceptor for the enzyme in this species is believed to be plastoquinone. Couples the redox reaction to proton translocation, and thus conserves the redox energy in a proton gradient. This is NAD(P)H-quinone oxidoreductase subunit K, chloroplastic from Cycas taitungensis (Prince sago).